An 82-amino-acid chain; its full sequence is Large ribosomal subunit protein bL31B (82 aa).

It belongs to the bacterial ribosomal protein bL31 family. Type B subfamily. In terms of assembly, part of the 50S ribosomal subunit.

This Amoebophilus asiaticus (strain 5a2) protein is Large ribosomal subunit protein bL31B.